Consider the following 185-residue polypeptide: Probable RNA 2'-phosphotransferase (185 aa).

Belongs to the KptA/TPT1 family.

Removes the 2'-phosphate from RNA via an intermediate in which the phosphate is ADP-ribosylated by NAD followed by a presumed transesterification to release the RNA and generate ADP-ribose 1''-2''-cyclic phosphate (APPR&gt;P). May function as an ADP-ribosylase. In Rhizobium rhizogenes (strain K84 / ATCC BAA-868) (Agrobacterium radiobacter), this protein is Probable RNA 2'-phosphotransferase.